The sequence spans 422 residues: Probable cell wall mannoprotein PIR32 (422 aa).

A signal peptide spans 1 to 21 (MIHYLIFPILLIFFQIIKSSG). 2 disordered regions span residues 116–143 (DGQV…EDCF) and 155–313 (DYQD…EGYE). Over residues 133–143 (GDDDDDDEDCF) the composition is skewed to acidic residues. Residues 158–169 (DMNTQEQANEDS) show a composition bias toward polar residues. Positions 179-214 (HQQVVDQNQQINEEEEETQEQQMQEENNNTNEIEDN) form a coiled coil. Low complexity-rich tracts occupy residues 180–189 (QQVVDQNQQI) and 198–209 (EQQMQEENNNTN). N-linked (GlcNAc...) asparagine glycosylation occurs at Asn206. Acidic residues predominate over residues 220–231 (ETIEEIYDDIDN). N-linked (GlcNAc...) asparagine glycans are attached at residues Asn232 and Asn237. Residues 238-248 (NSKKYHKKRPH) are compositionally biased toward basic residues. Basic and acidic residues-rich tracts occupy residues 249 to 284 (NNYE…DHKW) and 300 to 311 (QEQKPKHEKSEG). N-linked (GlcNAc...) asparagine glycosylation is present at Asn328.

The protein belongs to the PIR protein family. In terms of processing, O-glycosylated. Extensively O-mannosylated.

It localises to the secreted. The protein resides in the cell wall. In terms of biological role, probable structural component of the cell wall involved in cell wall integrity and virulence. The sequence is that of Probable cell wall mannoprotein PIR32 (PIR32) from Candida albicans (strain SC5314 / ATCC MYA-2876) (Yeast).